We begin with the raw amino-acid sequence, 299 residues long: ATP phosphoribosyltransferase (299 aa).

Belongs to the ATP phosphoribosyltransferase family. Long subfamily. The cofactor is Mg(2+).

The protein localises to the cytoplasm. It carries out the reaction 1-(5-phospho-beta-D-ribosyl)-ATP + diphosphate = 5-phospho-alpha-D-ribose 1-diphosphate + ATP. Its pathway is amino-acid biosynthesis; L-histidine biosynthesis; L-histidine from 5-phospho-alpha-D-ribose 1-diphosphate: step 1/9. Its activity is regulated as follows. Feedback inhibited by histidine. Catalyzes the condensation of ATP and 5-phosphoribose 1-diphosphate to form N'-(5'-phosphoribosyl)-ATP (PR-ATP). Has a crucial role in the pathway because the rate of histidine biosynthesis seems to be controlled primarily by regulation of HisG enzymatic activity. This Mannheimia succiniciproducens (strain KCTC 0769BP / MBEL55E) protein is ATP phosphoribosyltransferase.